Consider the following 465-residue polypeptide: UDP-N-acetylmuramate--L-alanine ligase (465 aa).

125-131 is an ATP binding site; the sequence is GTHGKTT.

The protein belongs to the MurCDEF family.

It localises to the cytoplasm. The enzyme catalyses UDP-N-acetyl-alpha-D-muramate + L-alanine + ATP = UDP-N-acetyl-alpha-D-muramoyl-L-alanine + ADP + phosphate + H(+). The protein operates within cell wall biogenesis; peptidoglycan biosynthesis. Functionally, cell wall formation. The protein is UDP-N-acetylmuramate--L-alanine ligase of Deinococcus geothermalis (strain DSM 11300 / CIP 105573 / AG-3a).